A 132-amino-acid chain; its full sequence is Large ribosomal subunit protein uL14 (132 aa).

The protein belongs to the universal ribosomal protein uL14 family. Part of the 50S ribosomal subunit. Forms a cluster with proteins L3 and L24e, part of which may contact the 16S rRNA in 2 intersubunit bridges.

Binds to 23S rRNA. Forms part of two intersubunit bridges in the 70S ribosome. The protein is Large ribosomal subunit protein uL14 of Natronomonas pharaonis (strain ATCC 35678 / DSM 2160 / CIP 103997 / JCM 8858 / NBRC 14720 / NCIMB 2260 / Gabara) (Halobacterium pharaonis).